The chain runs to 369 residues: LIM homeobox transcription factor 1-beta (369 aa).

2 LIM zinc-binding domains span residues 23–73 (CEGC…CKQD) and 82–135 (CSGC…CKGD). The segment at 143 to 196 (LSSVSPDESDSVKSEDEDGDMKPAKGQGSQSKGGGDDGKDPRRPKRPRTILTTQ) is disordered. The homeobox DNA-binding region spans 186 to 245 (PKRPRTILTTQQRRAFKASFEVSSKPCRKVRETLAAETGLSVRVVQVWFQNQRAKMKKLA).

In terms of assembly, interacts with DHX9.

The protein resides in the nucleus. Its function is as follows. Transcription factor involved in the regulation of podocyte-expressed genes. Essential for the specification of dorsal limb fate at both the zeugopodal and autopodal levels. This Mesocricetus auratus (Golden hamster) protein is LIM homeobox transcription factor 1-beta (LMX1B).